The chain runs to 378 residues: Putative UDP-N-acetylglucosamine 2-epimerase (378 aa).

Belongs to the UDP-N-acetylglucosamine 2-epimerase family.

The protein localises to the cytoplasm. The enzyme catalyses UDP-N-acetyl-alpha-D-glucosamine = UDP-N-acetyl-alpha-D-mannosamine. The protein is Putative UDP-N-acetylglucosamine 2-epimerase of Thermotoga maritima (strain ATCC 43589 / DSM 3109 / JCM 10099 / NBRC 100826 / MSB8).